The primary structure comprises 336 residues: DNA-directed RNA polymerase subunit alpha (336 aa).

The interval 1–232 (MIQKNWQELI…DQLGVFVNFD (232 aa)) is alpha N-terminal domain (alpha-NTD). An alpha C-terminal domain (alpha-CTD) region spans residues 248–336 (FNPALLKKVD…DLAKRYEDQY (89 aa)).

This sequence belongs to the RNA polymerase alpha chain family. Homodimer. The RNAP catalytic core consists of 2 alpha, 1 beta, 1 beta' and 1 omega subunit. When a sigma factor is associated with the core the holoenzyme is formed, which can initiate transcription.

It carries out the reaction RNA(n) + a ribonucleoside 5'-triphosphate = RNA(n+1) + diphosphate. DNA-dependent RNA polymerase catalyzes the transcription of DNA into RNA using the four ribonucleoside triphosphates as substrates. In Rhizobium etli (strain CIAT 652), this protein is DNA-directed RNA polymerase subunit alpha.